Consider the following 520-residue polypeptide: MGNSLGCSASGERLVSAARDGDAVEARMLLELSPALARYSTFGGLNSPLHFAAAKGHLDIVTLLLEKGADVNVRNYCGQTALMHACRHGHWEVVQMLLLFRCNVTRADYLSGRTALHFAAHDGLVRCVRLLLADFVPSAPLEDGASSTVDGGECQTNSGSSPCSSLGLKFNESARLRYINKPADGGVTALHMAALNGHFDCMQLLIDLGANVSAVTFPYGTTANLIGAGSTPLHYAAGGGNAECCQLLLSKGASKLTLNCNGWLPIDVARMFGRRFLEPLLSPNSNSSIPAYQPSNYLALPFMSILNIAREFGLLHTVASVDDSDLCAVCLERSCSVAAEGCCHEFCIKCALYLCSTSNTRVEFTGPPGSIPCPLCRNGIMSFTKLPSTPTEGLKSSSALTFCNPCMLNTRSVDSPATISKAEIRRNRVAAVSSELVCPLTCSPFPSSALPTCRCSDDDPCDAIETQDGSEVQSPQPSHCASMEMDKREQQDLDRTSCSGMFWSRRSCHREEQCNAEINA.

ANK repeat units lie at residues G44 to V73, C77 to R106, S111 to P140, G185 to A214, and A228 to L258. An RING-type zinc finger spans residues C327–R377. A compositionally biased stretch (polar residues) spans Q467–H479. The segment at Q467–L493 is disordered. Over residues E484–L493 the composition is skewed to basic and acidic residues.

It catalyses the reaction S-ubiquitinyl-[E2 ubiquitin-conjugating enzyme]-L-cysteine + [acceptor protein]-L-lysine = [E2 ubiquitin-conjugating enzyme]-L-cysteine + N(6)-ubiquitinyl-[acceptor protein]-L-lysine.. It functions in the pathway protein modification; protein ubiquitination. In Oryza sativa subsp. japonica (Rice), this protein is Probable E3 ubiquitin-protein ligase XBOS33 (XBOS33).